Consider the following 120-residue polypeptide: uncharacterized protein (120 aa).

The signal sequence occupies residues 1-19 (MTSFAVVARLITRAPRVRA). Disordered stretches follow at residues 48–71 (VAKK…DKAK) and 90–120 (DTVT…KNLK). Positions 90 to 103 (DTVTGKTEETKESI) are enriched in basic and acidic residues.

This is an uncharacterized protein from Arabidopsis thaliana (Mouse-ear cress).